Consider the following 727-residue polypeptide: FACT complex subunit Ssrp1 (727 aa).

Disordered regions lie at residues 458-565 and 596-727; these read AEAR…AFML and ELKD…EGSD. Composition is skewed to acidic residues over residues 464-479 and 487-508; these read EEED…ESTD and NESD…DDSD. The span at 510 to 519 shows a compositional bias: gly residues; the sequence is SGGGGDGGTD. 3 stretches are compositionally biased toward basic and acidic residues: residues 529–555, 596–620, and 675–703; these read KKNE…DTGK, ELKD…EMRN, and DQEK…KSES. The HMG box DNA-binding region spans 556-622; that stretch reads PKRGTSAFML…RYQEEMRNYK (67 aa). Over residues 704–727 the composition is skewed to acidic residues; it reads EGGDSDDASNASEDDDEEEDEGSD.

This sequence belongs to the SSRP1 family. In terms of assembly, component of the FACT complex, a stable heterodimer of dre4/spt16 and Ssrp.

The protein localises to the nucleus. The protein resides in the chromosome. It localises to the nucleolus. Its function is as follows. Component of the FACT complex, a general chromatin factor that acts to reorganize nucleosomes. The FACT complex is involved in multiple processes that require DNA as a template such as mRNA elongation, DNA replication and DNA repair. During transcription elongation the FACT complex acts as a histone chaperone that both destabilizes and restores nucleosomal structure. It facilitates the passage of RNA polymerase II and transcription by promoting the dissociation of one histone H2A-H2B dimer from the nucleosome, then subsequently promotes the reestablishment of the nucleosome following the passage of RNA polymerase II. Binds specifically to single-stranded DNA and RNA with highest affinity for nucleotides G and U. The FACT complex is required for expression of Hox genes. This is FACT complex subunit Ssrp1 (Ssrp) from Drosophila pseudoobscura pseudoobscura (Fruit fly).